Reading from the N-terminus, the 167-residue chain is MLAVALLVLLCASASANSIQSRTSSYSGEYGGKGGKRFSHSGNQLDGPITAFRIRVNRYYIVGLQVRYGTVWSDYVGGTQGDLEEIFLHPGESVIQVSGKYKSYVKQMIFVTDKGRYLPFGKASGTSFNAVPLHPNTVLRFISGRSGSAIDSISLHWDTYPSHCNTC.

A signal peptide spans 1 to 16 (MLAVALLVLLCASASA). The Jacalin-type lectin domain maps to 24–159 (SSYSGEYGGK…IDSISLHWDT (136 aa)).

This sequence belongs to the jacalin lectin family.

It localises to the secreted. The protein localises to the extracellular space. Its subcellular location is the extracellular matrix. It is found in the zymogen granule lumen. The protein resides in the golgi apparatus lumen. Functionally, may play a role in protein trafficking. May act as a linker molecule between the submembranous matrix on the luminal side of zymogen granule membrane (ZGM) and aggregated secretory proteins during granule formation in the TGN. This chain is Zymogen granule membrane protein 16 (Zg16), found in Mus musculus (Mouse).